A 442-amino-acid polypeptide reads, in one-letter code: tRNA modification GTPase MnmE (442 aa).

3 residues coordinate (6S)-5-formyl-5,6,7,8-tetrahydrofolate: R27, E84, and K124. The TrmE-type G domain occupies 221–366 (GFQIVILGAP…LMELISQASA (146 aa)). GTP-binding positions include 231 to 236 (NAGKSS), 250 to 256 (TEEPGTT), 275 to 278 (DTAG), and 329 to 332 (NKAD). Residues S235 and T256 each coordinate Mg(2+). K442 contributes to the (6S)-5-formyl-5,6,7,8-tetrahydrofolate binding site.

It belongs to the TRAFAC class TrmE-Era-EngA-EngB-Septin-like GTPase superfamily. TrmE GTPase family. In terms of assembly, homodimer. Heterotetramer of two MnmE and two MnmG subunits. K(+) is required as a cofactor.

The protein localises to the cytoplasm. Exhibits a very high intrinsic GTPase hydrolysis rate. Involved in the addition of a carboxymethylaminomethyl (cmnm) group at the wobble position (U34) of certain tRNAs, forming tRNA-cmnm(5)s(2)U34. The sequence is that of tRNA modification GTPase MnmE from Chelativorans sp. (strain BNC1).